The following is a 278-amino-acid chain: Dehydrogenase/reductase SDR family member 4 (278 aa).

Position 36–60 (36–60) interacts with NADP(+); sequence LVTASTDGIGFAIARRLAQDGAHVV. Lys-92 bears the N6-acetyllysine; alternate mark. N6-succinyllysine; alternate is present on Lys-92. At Lys-105 the chain carries N6-acetyllysine. Ile-140 carries the phosphoserine modification. Ser-169 contacts substrate. The active-site Proton acceptor is Tyr-182. Lys-186 lines the NADP(+) pocket. The residue at position 216 (Lys-216) is an N6-acetyllysine; alternate. Lys-216 carries the post-translational modification N6-succinyllysine; alternate. A Phosphoserine modification is found at Ser-220. Lys-227 and Lys-234 each carry N6-succinyllysine. Residues 276–278 carry the Peroxisomal targeting signal motif; that stretch reads SRL.

The protein belongs to the short-chain dehydrogenases/reductases (SDR) family. In terms of assembly, homotetramer. Predominantly expressed in normal cervix (at protein level). As to expression, expressed in some neoplastic cervical tissues, but not in normal cervix (at protein level). In terms of tissue distribution, expressed in a few neoplastic cervical tissues. High expression in liver.

The protein resides in the peroxisome. It localises to the nucleus. It catalyses the reaction a secondary alcohol + NADP(+) = a ketone + NADPH + H(+). The enzyme catalyses 3beta-hydroxy-5beta-pregnane-20-one + NADP(+) = 5beta-pregnan-3,20-dione + NADPH + H(+). The catalysed reaction is 5beta-dihydrotestosterone + NADPH + H(+) = 5beta-androstane-3beta,17beta-diol + NADP(+). It carries out the reaction 5beta-androstane-3,17-dione + NADPH + H(+) = 3beta-hydroxy-5beta-androstane-17-one + NADP(+). It catalyses the reaction isatin + NADPH + H(+) = 3-hydroxyindolin-2-one + NADP(+). The enzyme catalyses lithocholate + NADP(+) = 3-oxo-5beta-cholan-24-oate + NADPH + H(+). The catalysed reaction is 3-oxo-5beta-cholan-24-oate + NADPH + H(+) = isolithocholate + NADP(+). With respect to regulation, inhibited by flavonoids (quercetin and genistein), cetylpyridium chloride, phenylhexane and valproic acid. Low inhibition is observed with fatty acids (myristic acid and lauric acid). No significant inhibition is observed with barbital, dicumarol, indomethacin, metyrapone, ethacrynic acid, disulfiram, hexestrol and benzodiazepines (diazepam and nitrazepam). Its function is as follows. NADPH-dependent oxidoreductase which catalyzes the reduction of a variety of compounds bearing carbonyl groups including ketosteroids, alpha-dicarbonyl compounds, aldehydes, aromatic ketones and quinones. Reduces 3-ketosteroids and benzil into 3beta-hydroxysteroids and R-benzoin, respectively, in contrast to the stereoselectivity of non-primate DHRS4s which produce 3alpha-hydroxysteroids and S-benzoin. Diplays low activity toward all-trans-retinal and no activity toward 9-cis-retinal as compared to non-primate mammals. In the reverse reaction, catalyze the NAD-dependent oxidation of 3beta-hydroxysteroids and alcohol, but with much lower efficiency. Involved in the metabolism of 3beta-hydroxysteroids, isatin and xenobiotic carbonyl compounds. In terms of biological role, no detected catalytic activity in vitro, possibly due to the lack of catalytic site. Functionally, NADPH-dependent oxidoreductase which catalyzes the reduction of a variety of compounds bearing carbonyl groups including ketosteroids, alpha-dicarbonyl compounds, aldehydes, aromatic ketones and quinones. Involved in the metabolism of 3beta-hydroxysteroids, isatin and xenobiotic carbonyl compounds. Has a higher catalytic activity for xenobiotic alpha-dicarbonyl compounds, sucha as benzil, than isoform 1 and is involved in benzil detoxification. The chain is Dehydrogenase/reductase SDR family member 4 from Homo sapiens (Human).